The chain runs to 495 residues: uncharacterized protein (495 aa).

Serine 16, glutamate 36, tryptophan 45, aspartate 56, tyrosine 62, and valine 105 together coordinate FAD.

It belongs to the FAD-binding monooxygenase family. It depends on FAD as a cofactor.

This is an uncharacterized protein from Mycobacterium tuberculosis (strain CDC 1551 / Oshkosh).